Consider the following 130-residue polypeptide: Small ribosomal subunit protein uS9 (130 aa).

This sequence belongs to the universal ribosomal protein uS9 family.

The chain is Small ribosomal subunit protein uS9 from Stutzerimonas stutzeri (strain A1501) (Pseudomonas stutzeri).